The primary structure comprises 231 residues: MKRAVVVFSGGQDSTTCLVQALQQYDEVHCVTFDYGQRHRAEIDVARELALKLGARAHKVLDVTLLNELAVSSLTRDSIPVPDYEPEADGIPNTFVPGRNILFLTLAAIYAYQVKAEAVITGVCETDFSGYPDCRDEFVKALNHAVSLGMAKDIRFETPLMWIDKAETWALADYYGKLDLVRNETLTCYNGIKGDGCGHCAACNLRANGLNHYLADKPTVMAAMKQKTGLK.

Phe8–Leu18 contributes to the ATP binding site. Residues Cys188, Cys197, Cys200, and Cys203 each contribute to the Zn(2+) site.

The protein belongs to the QueC family. It depends on Zn(2+) as a cofactor.

The enzyme catalyses 7-carboxy-7-deazaguanine + NH4(+) + ATP = 7-cyano-7-deazaguanine + ADP + phosphate + H2O + H(+). It functions in the pathway purine metabolism; 7-cyano-7-deazaguanine biosynthesis. In terms of biological role, catalyzes the ATP-dependent conversion of 7-carboxy-7-deazaguanine (CDG) to 7-cyano-7-deazaguanine (preQ(0)). This chain is 7-cyano-7-deazaguanine synthase, found in Escherichia coli O1:K1 / APEC.